Reading from the N-terminus, the 436-residue chain is Succinyl-CoA:glutarate CoA-transferase (436 aa).

A mitochondrion-targeting transit peptide spans 1-8; the sequence is MLWMLARA. Asp203 functions as the Nucleophile in the catalytic mechanism. Residues Lys392 and Lys423 each carry the N6-acetyllysine modification.

Belongs to the CoA-transferase III family.

It localises to the mitochondrion. The catalysed reaction is glutarate + succinyl-CoA = glutaryl-CoA + succinate. The enzyme catalyses 3-hydroxy-3-methylglutarate + succinyl-CoA = (3S)-3-hydroxy-3-methylglutaryl-CoA + succinate. It carries out the reaction 3-hydroxy-3-methylglutarate + glutaryl-CoA = (3S)-3-hydroxy-3-methylglutaryl-CoA + glutarate. It catalyses the reaction hexanedioate + glutaryl-CoA = hexanedioyl-CoA + glutarate. The catalysed reaction is itaconate + glutaryl-CoA = itaconyl-CoA + glutarate. The enzyme catalyses itaconate + succinyl-CoA = itaconyl-CoA + succinate. Functionally, coenzyme A (CoA) transferase that reversibly catalyzes the transfer of a CoA moiety from a dicarboxyl-CoA to a dicarboxylate in a metabolite recycling process. Displays preference for succinyl-CoA and glutarate-CoA as dicarboxyl-CoA donors and glutarate, succinate, adipate/hexanedioate, itaconate and 3-hydroxy-3-methylglutarate as dicarboxylate acceptors. Acts on intermediates or end products of lysine and tryptophan degradation pathway, in particular catalyzes succinyl-CoA-dependent reesterification of free glutarate into glutaryl-CoA to prevent renal excretion of glutarate. Upon inflammation, may convert macrophage-derived itaconate to itaconyl-CoA in erythroid precursors where it negatively regulates the TCA cycle and heme synthesis to limit erythroid differentiation in the context of stress erythropoiesis. This is Succinyl-CoA:glutarate CoA-transferase from Mus musculus (Mouse).